A 378-amino-acid chain; its full sequence is MIYDFLKEKKFGYTTGSCVVAGAYCGIYYLKHSVKLNIVELENSKNDKLIIPIEDVKLGKIATIKNINNTGKIKPNRATTIVKKFSGEDIDITNGIDIVVDVELLKMEKDKPKIEIVGGNGVGIVTKDGLQIKKGEYAINPKPREMIKNNIINLLDDDERAIIKITIPKGEELAKKTLNPKLGIIGGISILGTTGIVRPMSNEAYKESLAPQIDVALANNYKKLIFTPGNIGTKYAKIKYGVDDDNIVEVSNFWSFMLDKAVEKGVKDILIFGHSGKIIKLAGGIYDTHSKVADARNEILTAYSSPFINDKQILKNILYSNTTEEIVKILEKENILHEVFNLIAERVVERVSSRWEGIKFSCVIIDMKGDILGSHIYS.

This sequence belongs to the CbiD family.

The enzyme catalyses Co-precorrin-5B + S-adenosyl-L-methionine = Co-precorrin-6A + S-adenosyl-L-homocysteine. It functions in the pathway cofactor biosynthesis; adenosylcobalamin biosynthesis; cob(II)yrinate a,c-diamide from sirohydrochlorin (anaerobic route): step 6/10. Functionally, catalyzes the methylation of C-1 in cobalt-precorrin-5B to form cobalt-precorrin-6A. In Methanococcus aeolicus (strain ATCC BAA-1280 / DSM 17508 / OCM 812 / Nankai-3), this protein is Cobalt-precorrin-5B C(1)-methyltransferase.